We begin with the raw amino-acid sequence, 533 residues long: Retinoid isomerohydrolase (533 aa).

Ser-2 bears the N-acetylserine mark. Thr-101 and Thr-105 each carry phosphothreonine. A lipid anchor (S-palmitoyl cysteine; in membrane form) is attached at Cys-112. At Lys-113 the chain carries N6-acetyllysine. Ser-117 is subject to Phosphoserine. Position 180 (His-180) interacts with Fe cation. The S-palmitoyl cysteine; in membrane form moiety is linked to residue Cys-231. Fe cation-binding residues include His-241 and His-313. S-palmitoyl cysteine; in membrane form attachment occurs at residues Cys-329 and Cys-330. His-527 serves as a coordination point for Fe cation.

Belongs to the carotenoid oxygenase family. Interacts with MYO7A; this mediates light-dependent intracellular transport of RPE65. Requires Fe(2+) as cofactor. In terms of processing, palmitoylation by LRAT regulates ligand binding specificity; the palmitoylated form (membrane form) specifically binds all-trans-retinyl-palmitate, while the soluble unpalmitoylated form binds all-trans-retinol (vitamin A). In terms of tissue distribution, retinal pigment epithelium specific.

It localises to the cytoplasm. The protein resides in the cell membrane. The protein localises to the microsome membrane. It carries out the reaction an all-trans-retinyl ester + H2O = 11-cis-retinol + a fatty acid + H(+). The enzyme catalyses lutein = (3R,3'S)-zeaxanthin. The catalysed reaction is all-trans-retinyl hexadecanoate + H2O = 11-cis-retinol + hexadecanoate + H(+). Its function is as follows. Critical isomerohydrolase in the retinoid cycle involved in regeneration of 11-cis-retinal, the chromophore of rod and cone opsins. Catalyzes the cleavage and isomerization of all-trans-retinyl fatty acid esters to 11-cis-retinol which is further oxidized by 11-cis retinol dehydrogenase to 11-cis-retinal for use as visual chromophore. Essential for the production of 11-cis retinal for both rod and cone photoreceptors. Also capable of catalyzing the isomerization of lutein to meso-zeaxanthin an eye-specific carotenoid. The soluble form binds vitamin A (all-trans-retinol), making it available for LRAT processing to all-trans-retinyl ester. The membrane form, palmitoylated by LRAT, binds all-trans-retinyl esters, making them available for IMH (isomerohydrolase) processing to all-cis-retinol. The soluble form is regenerated by transferring its palmitoyl groups onto 11-cis-retinol, a reaction catalyzed by LRAT. In Chlorocebus aethiops (Green monkey), this protein is Retinoid isomerohydrolase (RPE65).